We begin with the raw amino-acid sequence, 312 residues long: 4-hydroxyphenylacetate decarboxylase activating enzyme (312 aa).

The region spanning 16–299 is the Radical SAM core domain; the sequence is HDGPGCRTSV…MEHLQQLYLD (284 aa). 7 residues coordinate [4Fe-4S] cluster: Cys30, Cys34, Cys37, Cys56, Cys62, Cys65, and Cys101. 36–38 is a binding site for S-adenosyl-L-methionine; the sequence is WCA. 4Fe-4S ferredoxin-type domains are found at residues 47 to 79 and 80 to 112; these read KHIMVAENVCKWKNGCRSCINACSHDSIKFSED and GKLKISWDTCEKCETFDCVNMCPNNALKQCVKE. Residues Gly140, 189–191, and His263 contribute to the S-adenosyl-L-methionine site; that span reads DVK.

Belongs to the organic radical-activating enzymes family. As to quaternary structure, monomer. Requires [4Fe-4S] cluster as cofactor.

It catalyses the reaction glycyl-[protein] + reduced [flavodoxin] + S-adenosyl-L-methionine = glycin-2-yl radical-[protein] + semiquinone [flavodoxin] + 5'-deoxyadenosine + L-methionine + H(+). Its function is as follows. Catalyzes activation of 4-hydroxyphenylacetate decarboxylase under anaerobic conditions by generation of an organic free radical on a glycine residue, via a homolytic cleavage of S-adenosyl-L-methionine (SAM). The protein is 4-hydroxyphenylacetate decarboxylase activating enzyme of Clostridium scatologenes.